The sequence spans 335 residues: Tetraacyldisaccharide 4'-kinase (335 aa).

V58–T65 is an ATP binding site.

The protein belongs to the LpxK family.

It carries out the reaction a lipid A disaccharide + ATP = a lipid IVA + ADP + H(+). Its pathway is glycolipid biosynthesis; lipid IV(A) biosynthesis; lipid IV(A) from (3R)-3-hydroxytetradecanoyl-[acyl-carrier-protein] and UDP-N-acetyl-alpha-D-glucosamine: step 6/6. Transfers the gamma-phosphate of ATP to the 4'-position of a tetraacyldisaccharide 1-phosphate intermediate (termed DS-1-P) to form tetraacyldisaccharide 1,4'-bis-phosphate (lipid IVA). The chain is Tetraacyldisaccharide 4'-kinase from Hydrogenovibrio crunogenus (strain DSM 25203 / XCL-2) (Thiomicrospira crunogena).